Consider the following 165-residue polypeptide: Cytochrome c-type biogenesis protein CcmE (165 aa).

Residues 1–7 (MTRKQKR) are Cytoplasmic-facing. A helical; Signal-anchor for type II membrane protein transmembrane segment spans residues 8–28 (LAIIGGGMSFIVAAVLLVMFA). The Periplasmic segment spans residues 29 to 165 (FGQSIAYFYM…ASGDKTGATK (137 aa)). 2 residues coordinate heme: histidine 123 and tyrosine 127. Positions 138–165 (DKGLWQQGAEGAAPAASAASGDKTGATK) are disordered. Residues 145–158 (GAEGAAPAASAASG) show a composition bias toward low complexity.

Belongs to the CcmE/CycJ family.

Its subcellular location is the cell inner membrane. Its function is as follows. Heme chaperone required for the biogenesis of c-type cytochromes. Transiently binds heme delivered by CcmC and transfers the heme to apo-cytochromes in a process facilitated by CcmF and CcmH. This is Cytochrome c-type biogenesis protein CcmE from Agrobacterium fabrum (strain C58 / ATCC 33970) (Agrobacterium tumefaciens (strain C58)).